The following is a 554-amino-acid chain: MASSQVGDMVNGNAEPTRHLAKFPPSLWGDRFTSFTLDKQLWDKYGNEIEVLKEQVRSMVVAGGRKAAEQINLINVLERLGVSYHFEKEIEEQLEQLFAKFEDNEDYDLFTIALHFRIFRQHGYKMSCDVFNKFRDSNGEFKETMSNDVQGMLSLYEATYLKIRGEGFLDEAHAFTIAQLESLVGGPHLSSDLSEQVMHALKQSIHRGFPRLEAKHFISFYEKDASRNETLLRLAKLDFNQLQLSHREELCHIFRWWKELDLISKVPYARDRAVECFFWSTCAYYEPQHFVGRAVLTKIMLLLSVTDDTYDAYGTYDELKLYTNAVQRWDVSAMDELPDYMKALYRALLNVYDEVERDLAKQGRDYGVHHSKEAFKEIVRSYEIEAEWFKEGYVASFEAYMKNALVTSTGRLHTTSCFMGLEADVATTEAFEWILTKPKMVAASGAIGRLVDDVMSHDEEQERGHVATGLDCYMKQHGVSKQEAIVELYKMIENAWRDINEEILKPTAISMKLLIRVLNLSRISDVVYKYVDGYTHPEIIKDHVISLFEDPIPM.

2 residues coordinate Mg(2+): Asp307 and Asp311. The DDXXD motif motif lies at 326–330 (VQRWD). Mg(2+) contacts are provided by Asp452, Ser456, and Glu460.

It belongs to the terpene synthase family. The cofactor is Mg(2+).

The catalysed reaction is (2E,6E)-farnesyl diphosphate + H2O = valerianol + diphosphate. It functions in the pathway secondary metabolite biosynthesis; terpenoid biosynthesis. Terpene synthase that catalyzes the biosynthesis of the terpene valerianol, which is a volatile compound of floral scent. The sequence is that of Valerianol synthase TPS1E from Camellia hiemalis (Camellia).